Reading from the N-terminus, the 130-residue chain is Histone H2A type 2 (130 aa).

Positions 1–22 (MSGRGKQGGKTRAKSKTRSSRA) are disordered. Serine 2 is modified (N-acetylserine). Serine 2 carries the phosphoserine modification. At lysine 6 the chain carries N6-(2-hydroxyisobutyryl)lysine. Lysine 6 bears the N6-acetyllysine mark. Residues 7–19 (QGGKTRAKSKTRS) are compositionally biased toward basic residues. The residue at position 10 (lysine 10) is an N6-(2-hydroxyisobutyryl)lysine; alternate. Lysine 10 carries the post-translational modification N6-lactoyllysine; alternate. Lysine 10 carries the post-translational modification N6-succinyllysine. Glycyl lysine isopeptide (Lys-Gly) (interchain with G-Cter in ubiquitin) cross-links involve residues lysine 14 and lysine 16. Lysine 37 is subject to N6-(2-hydroxyisobutyryl)lysine; alternate. An N6-(2-hydroxyisobutyryl)lysine modification is found at lysine 76. Lysine 96 is modified (N6-(2-hydroxyisobutyryl)lysine; alternate). The residue at position 96 (lysine 96) is an N6-succinyllysine. Lysine 96 bears the N6-glutaryllysine; alternate mark. An N5-methylglutamine modification is found at glutamine 105. Residue lysine 119 is modified to N6-(2-hydroxyisobutyryl)lysine; alternate. Residue lysine 119 is modified to N6-glutaryllysine; alternate. Residue lysine 120 forms a Glycyl lysine isopeptide (Lys-Gly) (interchain with G-Cter in ubiquitin) linkage.

It belongs to the histone H2A family. As to quaternary structure, the nucleosome is a histone octamer containing two molecules each of H2A, H2B, H3 and H4 assembled in one H3-H4 heterotetramer and two H2A-H2B heterodimers. The octamer wraps approximately 147 bp of DNA. In terms of processing, monoubiquitination of Lys-120 (H2AK119Ub) gives a specific tag for epigenetic transcriptional repression. Following DNA double-strand breaks (DSBs), it is ubiquitinated through 'Lys-63' linkage of ubiquitin moieties, leading to the recruitment of repair proteins to sites of DNA damage. H2AK119Ub and ionizing radiation-induced 'Lys-63'-linked ubiquitination are distinct events. Post-translationally, phosphorylation on Ser-2 is enhanced during mitosis. Phosphorylation on Ser-2 directly represses transcription. Glutamine methylation at Gln-105 (H2AQ104me) by FBL is specifically dedicated to polymerase I. It is present at 35S ribosomal DNA locus and impairs binding of the FACT complex.

It localises to the nucleus. It is found in the chromosome. Its function is as follows. Core component of nucleosome. Nucleosomes wrap and compact DNA into chromatin, limiting DNA accessibility to the cellular machineries which require DNA as a template. Histones thereby play a central role in transcription regulation, DNA repair, DNA replication and chromosomal stability. DNA accessibility is regulated via a complex set of post-translational modifications of histones, also called histone code, and nucleosome remodeling. The sequence is that of Histone H2A type 2 from Xenopus laevis (African clawed frog).